The chain runs to 230 residues: uncharacterized protein (230 aa).

In terms of domain architecture, S4 RNA-binding spans 2-69; the sequence is HRLAKIISNA…KPRLWIYYKP (68 aa). Catalysis depends on Asp-102, which acts as the Nucleophile.

This sequence belongs to the pseudouridine synthase RsuA family.

It carries out the reaction a uridine in RNA = a pseudouridine in RNA. This is an uncharacterized protein from Rickettsia conorii (strain ATCC VR-613 / Malish 7).